A 226-amino-acid polypeptide reads, in one-letter code: ATP-dependent dethiobiotin synthetase BioD (226 aa).

12 to 17 (DAGKTV) lines the ATP pocket. Thr-16 is a binding site for Mg(2+). Residue Lys-39 is part of the active site. Residue Ser-43 coordinates substrate. Residues Asp-47, 108 to 111 (EGVG), 168 to 169 (NC), 200 to 202 (PYL), and Asn-207 contribute to the ATP site. The Mg(2+) site is built by Asp-47 and Glu-108.

This sequence belongs to the dethiobiotin synthetase family. In terms of assembly, homodimer. It depends on Mg(2+) as a cofactor.

Its subcellular location is the cytoplasm. The catalysed reaction is (7R,8S)-7,8-diammoniononanoate + CO2 + ATP = (4R,5S)-dethiobiotin + ADP + phosphate + 3 H(+). It catalyses the reaction (7R,8S)-8-amino-7-(carboxyamino)nonanoate + ATP = (4R,5S)-dethiobiotin + ADP + phosphate + H(+). The protein operates within cofactor biosynthesis; biotin biosynthesis; biotin from 7,8-diaminononanoate: step 1/2. In terms of biological role, catalyzes a mechanistically unusual reaction, the ATP-dependent insertion of CO2 between the N7 and N8 nitrogen atoms of 7,8-diaminopelargonic acid (DAPA, also called 7,8-diammoniononanoate) to form a ureido ring. This cyanobacterium does not encode bioA (which catalyzes the formation of the precursor for this reaction in the cannonical pathway), instead it encodes bioU, which replaces bioA and also performs the first half of the cannonical BioD reaction. Thus in this organism BioD has a different substrate. This Cyanothece sp. (strain PCC 7425 / ATCC 29141) protein is ATP-dependent dethiobiotin synthetase BioD.